Consider the following 456-residue polypeptide: Adenylosuccinate lyase (456 aa).

N(6)-(1,2-dicarboxyethyl)-AMP-binding positions include 15–16 (RY), 90–92 (NHD), and 122–123 (TS). Histidine 171 serves as the catalytic Proton donor/acceptor. Glutamine 247 contacts N(6)-(1,2-dicarboxyethyl)-AMP. Serine 295 functions as the Proton donor/acceptor in the catalytic mechanism. Residues serine 296, 301–303 (KVN), asparagine 309, arginine 335, and 340–344 (STVLR) contribute to the N(6)-(1,2-dicarboxyethyl)-AMP site.

The protein belongs to the lyase 1 family. Adenylosuccinate lyase subfamily. In terms of assembly, homotetramer. Residues from neighboring subunits contribute catalytic and substrate-binding residues to each active site.

The catalysed reaction is N(6)-(1,2-dicarboxyethyl)-AMP = fumarate + AMP. It carries out the reaction (2S)-2-[5-amino-1-(5-phospho-beta-D-ribosyl)imidazole-4-carboxamido]succinate = 5-amino-1-(5-phospho-beta-D-ribosyl)imidazole-4-carboxamide + fumarate. The protein operates within purine metabolism; AMP biosynthesis via de novo pathway; AMP from IMP: step 2/2. Its pathway is purine metabolism; IMP biosynthesis via de novo pathway; 5-amino-1-(5-phospho-D-ribosyl)imidazole-4-carboxamide from 5-amino-1-(5-phospho-D-ribosyl)imidazole-4-carboxylate: step 2/2. Catalyzes two reactions in de novo purine nucleotide biosynthesis. Catalyzes the breakdown of 5-aminoimidazole- (N-succinylocarboxamide) ribotide (SAICAR or 2-[5-amino-1-(5-phospho-beta-D-ribosyl)imidazole-4-carboxamido]succinate) to 5-aminoimidazole-4-carboxamide ribotide (AICAR or 5-amino-1-(5-phospho-beta-D-ribosyl)imidazole-4-carboxamide) and fumarate, and of adenylosuccinate (ADS or N(6)-(1,2-dicarboxyethyl)-AMP) to adenosine monophosphate (AMP) and fumarate. The polypeptide is Adenylosuccinate lyase (purB) (Legionella pneumophila subsp. pneumophila (strain Philadelphia 1 / ATCC 33152 / DSM 7513)).